Consider the following 246-residue polypeptide: 4-hydroxy-tetrahydrodipicolinate reductase (246 aa).

7 to 12 (GCSGRM) is an NAD(+) binding site. An NADP(+)-binding site is contributed by R34. NAD(+) is bound by residues 76–78 (ATT) and 102–105 (CPNT). H135 serves as the catalytic Proton donor/acceptor. H136 lines the (S)-2,3,4,5-tetrahydrodipicolinate pocket. The active-site Proton donor is the K139. 145 to 146 (GT) serves as a coordination point for (S)-2,3,4,5-tetrahydrodipicolinate.

It belongs to the DapB family.

It localises to the cytoplasm. It catalyses the reaction (S)-2,3,4,5-tetrahydrodipicolinate + NAD(+) + H2O = (2S,4S)-4-hydroxy-2,3,4,5-tetrahydrodipicolinate + NADH + H(+). The catalysed reaction is (S)-2,3,4,5-tetrahydrodipicolinate + NADP(+) + H2O = (2S,4S)-4-hydroxy-2,3,4,5-tetrahydrodipicolinate + NADPH + H(+). The protein operates within amino-acid biosynthesis; L-lysine biosynthesis via DAP pathway; (S)-tetrahydrodipicolinate from L-aspartate: step 4/4. Its function is as follows. Catalyzes the conversion of 4-hydroxy-tetrahydrodipicolinate (HTPA) to tetrahydrodipicolinate. The protein is 4-hydroxy-tetrahydrodipicolinate reductase of Chlamydia caviae (strain ATCC VR-813 / DSM 19441 / 03DC25 / GPIC) (Chlamydophila caviae).